The following is a 553-amino-acid chain: Transcription factor 7-like 1 (553 aa).

Residues 1 to 11 (MPQLNSGGGDE) are compositionally biased toward gly residues. Residues 1–61 (MPQLNSGGGD…SENHSSDSDS (61 aa)) form an interaction with CTNNB1 region. Disordered regions lie at residues 1 to 77 (MPQL…EKPR), 183 to 213 (GTPP…PYYP), and 392 to 474 (SARD…LTTK). Composition is skewed to basic and acidic residues over residues 17–32 (ELIR…EKSP) and 52–77 (SENH…EKPR). Positions 109–312 (LGGHYLPNGA…SPNLITKPSV (204 aa)) are interaction with AES and TLE4. The HMG box DNA-binding region spans 324-392 (IKKPLNAFML…LHSQLYPTWS (69 aa)). The segment covering 407–416 (KQSPEMEITK) has biased composition (basic and acidic residues). The segment at 408–553 (QSPEMEITKT…PLSLVTKSSD (146 aa)) is interaction with CTBP. Over residues 444–463 (SPATPSAALASPAAPAATHS) the composition is skewed to low complexity. Residues 464–473 (EQAQPLSLTT) show a composition bias toward polar residues.

Belongs to the TCF/LEF family. In terms of assembly, interacts with csnk1e, ctnnb1, ctbp, dact1 and gsk3b. May interact with ase and tle4. In terms of processing, phosphorylated. Phosphorylation by csnk1e promotes binding to ctnnb1 while phosphorylation by gsk3b may reverse this effect.

The protein resides in the nucleus. In terms of biological role, participates in the Wnt signaling pathway. Binds to DNA and acts as a repressor in the absence of ctnnb1, and as an activator in its presence. Required early in development for the establishment of the dorsal body axis in response to maternal Wnt signaling. The polypeptide is Transcription factor 7-like 1 (tcf7l1) (Xenopus tropicalis (Western clawed frog)).